Reading from the N-terminus, the 66-residue chain is Alpha-bisabolene synthase (66 aa).

This sequence belongs to the terpene synthase family. Tpsd subfamily. It depends on Mn(2+) as a cofactor. Requires K(+) as cofactor.

Its subcellular location is the cytoplasm. It carries out the reaction (2E,6E)-farnesyl diphosphate = (E,R)-alpha-bisabolene + diphosphate. Its pathway is terpene metabolism; oleoresin biosynthesis. Functionally, involved in defensive oleoresin formation in conifers in response to insect attack or other injury. Involved in sesquiterpene (C15) olefins biosynthesis. This chain is Alpha-bisabolene synthase, found in Pseudotsuga menziesii (Douglas-fir).